A 285-amino-acid polypeptide reads, in one-letter code: (3S)-malyl-CoA thioesterase (285 aa).

The substrate site is built by R70 and E122. Residues E122 and D148 each contribute to the Mg(2+) site.

It belongs to the HpcH/HpaI aldolase family. Homodimer or homotrimer. The cofactor is Mg(2+).

It catalyses the reaction (S)-malyl-CoA + H2O = (S)-malate + CoA + H(+). Catalyzes the hydrolysis of (3S)-malyl-CoA to (3S)-malate and free CoA. Inactive towards beta-methylmalyl-CoA and other CoA esters. The sequence is that of (3S)-malyl-CoA thioesterase from Cereibacter sphaeroides (strain KD131 / KCTC 12085) (Rhodobacter sphaeroides).